The primary structure comprises 266 residues: Proteasome subunit alpha type-1 (266 aa).

A disordered region spans residues Asp-235 to Glu-266. Positions Asp-249–Glu-266 are enriched in acidic residues.

Belongs to the peptidase T1A family. As to quaternary structure, the 26S proteasome consists of a 20S proteasome core and two 19S regulatory subunits. The 20S proteasome core is composed of 28 subunits that are arranged in four stacked rings, resulting in a barrel-shaped structure. The two end rings are each formed by seven alpha subunits, and the two central rings are each formed by seven beta subunits. The catalytic chamber with the active sites is on the inside of the barrel.

It localises to the cytoplasm. It is found in the nucleus. In terms of biological role, the proteasome is a multicatalytic proteinase complex which is characterized by its ability to cleave peptides with Arg, Phe, Tyr, Leu, and Glu adjacent to the leaving group at neutral or slightly basic pH. The proteasome has an ATP-dependent proteolytic activity. In Trypanosoma brucei rhodesiense, this protein is Proteasome subunit alpha type-1.